The primary structure comprises 161 residues: SsrA-binding protein (161 aa).

It belongs to the SmpB family.

It is found in the cytoplasm. Functionally, required for rescue of stalled ribosomes mediated by trans-translation. Binds to transfer-messenger RNA (tmRNA), required for stable association of tmRNA with ribosomes. tmRNA and SmpB together mimic tRNA shape, replacing the anticodon stem-loop with SmpB. tmRNA is encoded by the ssrA gene; the 2 termini fold to resemble tRNA(Ala) and it encodes a 'tag peptide', a short internal open reading frame. During trans-translation Ala-aminoacylated tmRNA acts like a tRNA, entering the A-site of stalled ribosomes, displacing the stalled mRNA. The ribosome then switches to translate the ORF on the tmRNA; the nascent peptide is terminated with the 'tag peptide' encoded by the tmRNA and targeted for degradation. The ribosome is freed to recommence translation, which seems to be the essential function of trans-translation. The polypeptide is SsrA-binding protein (Vibrio parahaemolyticus serotype O3:K6 (strain RIMD 2210633)).